Reading from the N-terminus, the 334-residue chain is Putative binding protein YtlA (334 aa).

The first 23 residues, 1 to 23 (MNRWLRLGFACVGSIFLMFALAA), serve as a signal peptide directing secretion. The N-palmitoyl cysteine moiety is linked to residue Cys24. Cys24 carries S-diacylglycerol cysteine lipidation.

Belongs to the bacterial solute-binding protein SsuA/TauA family.

The protein localises to the cell membrane. This Bacillus subtilis (strain 168) protein is Putative binding protein YtlA (ytlA).